A 521-amino-acid polypeptide reads, in one-letter code: MDGVIESPSNNTIKISPSTSDSSTTTPIITTPPTQSTATVTTKAAATTTTTEASTTPPPPQPTPTPTQSTATVTKEVETTTETIPPIVTKGKIKKSKKSIKKPTIVKRPTTPIDYKQWHTEWPIHVYSHPINGRYLVATKDLDEQTVILRDLPYTWAVDHATCDSVCQHCFLEVPLNQQILPTDFYMCEGCQRVGYCSANCRCIDYSQHRFECQIFKELDTEEYSPFLMSEIKLLVRTLSRKWLEDSITQTAGIDINDETIKKQNTYNQYKNPQSLIPQDNGLRYNDYAELVSNVENYNESLKESLSYWICKYVVKLSAKLGKIEDEFDLLNILLRNRCNAFYIQGRPRDGSSGESRGCGVYVRNSFFNHSCDPNVNYWVVNNTLEVECTLLKNVKEGDELTISYIDTTSPLNKRREKLLEGYLFNCLCTKCVADESLPLDQTGTLEKDDDDNDDEKEKMDEDDDEKDDDINNKNDKKSKYKSDGSTDDEEDEDNNNNKNNNKNKNNNSNNQDHQNNDKSN.

The tract at residues 1–101 (MDGVIESPSN…KIKKSKKSIK (101 aa)) is disordered. The span at 12 to 55 (TIKISPSTSDSSTTTPIITTPPTQSTATVTTKAAATTTTTEAST) shows a compositional bias: low complexity. Positions 56 to 65 (TPPPPQPTPT) are enriched in pro residues. Positions 66–90 (PTQSTATVTKEVETTTETIPPIVTK) are enriched in low complexity. Over residues 91–101 (GKIKKSKKSIK) the composition is skewed to basic residues. Residues 122–406 (WPIHVYSHPI…EGDELTISYI (285 aa)) enclose the SET domain. Zn(2+)-binding residues include cysteine 167, cysteine 170, cysteine 188, cysteine 191, cysteine 197, cysteine 201, histidine 209, and cysteine 213. The segment at 167–213 (CQHCFLEVPLNQQILPTDFYMCEGCQRVGYCSANCRCIDYSQHRFEC) adopts an MYND-type zinc-finger fold. Residues 442 to 521 (QTGTLEKDDD…QDHQNNDKSN (80 aa)) form a disordered region. Over residues 448-469 (KDDDDNDDEKEKMDEDDDEKDD) the composition is skewed to acidic residues. Residues 470 to 485 (DINNKNDKKSKYKSDG) are compositionally biased toward basic and acidic residues. A compositionally biased stretch (acidic residues) spans 486 to 495 (STDDEEDEDN). A compositionally biased stretch (low complexity) spans 497–514 (NNKNNNKNKNNNSNNQDH).

This sequence belongs to the class V-like SAM-binding methyltransferase superfamily.

Functionally, probable methyltransferase. In Dictyostelium discoideum (Social amoeba), this protein is SET and MYND domain-containing protein DDB_G0292140.